We begin with the raw amino-acid sequence, 437 residues long: Coiled-coil domain-containing protein 78 (437 aa).

3 coiled-coil regions span residues 83-114, 147-287, and 360-408; these read HLREQHEAEVFELRREILRLESRVLELELHGN, EELK…QRQE, and QRLQ…YKQE.

Belongs to the CCDC78 family.

It localises to the cytoplasm. It is found in the cytoskeleton. Its subcellular location is the microtubule organizing center. The protein localises to the centrosome. The protein resides in the centriole. It localises to the perinuclear region. It is found in the cell membrane. Its subcellular location is the sarcolemma. The protein localises to the sarcoplasmic reticulum. Component of the deuterosome, a structure that promotes de novo centriole amplification in multiciliated cells that can generate more than 100 centrioles. Deuterosome-mediated centriole amplification occurs in terminally differentiated multiciliated cells (G1/0) and not in S phase. Essential for centriole amplification and is required for CEP152 localization to the deuterosome. This Mus musculus (Mouse) protein is Coiled-coil domain-containing protein 78 (Ccdc78).